The primary structure comprises 97 residues: YcgL domain-containing protein PMI1171 (97 aa).

Residues 3–87 enclose the YcgL domain; sequence MICAIYRSTK…PVESMLNAYL (85 aa).

This is YcgL domain-containing protein PMI1171 from Proteus mirabilis (strain HI4320).